We begin with the raw amino-acid sequence, 693 residues long: Polyribonucleotide nucleotidyltransferase (693 aa).

D486 and D492 together coordinate Mg(2+). Positions 553–612 (PRFTTLKIHPDKIRDVIGKGGATIRALTEETGTSIDISDDGTVKIASVDKAAGDEARRRI) constitute a KH domain. The S1 motif domain maps to 622-690 (GRIYEGRVVK…KQGRIRLSMK (69 aa)).

The protein belongs to the polyribonucleotide nucleotidyltransferase family. As to quaternary structure, component of the RNA degradosome, which is a multiprotein complex involved in RNA processing and mRNA degradation. Mg(2+) serves as cofactor.

It localises to the cytoplasm. It catalyses the reaction RNA(n+1) + phosphate = RNA(n) + a ribonucleoside 5'-diphosphate. Its function is as follows. Involved in mRNA degradation. Catalyzes the phosphorolysis of single-stranded polyribonucleotides processively in the 3'- to 5'-direction. The polypeptide is Polyribonucleotide nucleotidyltransferase (Thioalkalivibrio sulfidiphilus (strain HL-EbGR7)).